The following is a 139-amino-acid chain: NADH dehydrogenase [ubiquinone] 1 alpha subcomplex subunit MCI4 (139 aa).

Belongs to the complex I NDUFA5 subunit family.

It localises to the mitochondrion inner membrane. Accessory subunit of the mitochondrial membrane respiratory chain NADH dehydrogenase (Complex I), that is believed not to be involved in catalysis. Complex I functions in the transfer of electrons from NADH to the respiratory chain. The immediate electron acceptor for the enzyme is believed to be ubiquinone. Involved in osmotic and oxidative resistance, yeast to hypha transition and the ability to damage and invade oral epithelial cells. The chain is NADH dehydrogenase [ubiquinone] 1 alpha subcomplex subunit MCI4 from Candida albicans (strain SC5314 / ATCC MYA-2876) (Yeast).